The sequence spans 468 residues: Mothers against decapentaplegic homolog 1 (468 aa).

Methionine 1 carries the N-acetylmethionine modification. An MH1 domain is found at 12–136 (PAVKRLLGWK…YKRVESPVLP (125 aa)). Residues cysteine 64, cysteine 109, cysteine 121, and histidine 126 each contribute to the Zn(2+) site. A disordered region spans residues 162 to 246 (NEPHMPLNAT…DGSQPMDTNM (85 aa)). Residues 188 to 210 (PNSSYPNSPGSSSSTYPHSPTSS) are compositionally biased toward low complexity. Residues 221–232 (DTPPPAYLPPED) are compositionally biased toward pro residues. The span at 237-246 (DGSQPMDTNM) shows a compositional bias: polar residues. The MH2 domain maps to 274-468 (WCSIVYYELN…SPHNPISSVS (195 aa)). A Phosphothreonine; by MINK1, TNIK and MAP4K4 modification is found at threonine 325. Positions 421–431 (KGWGAEYHRQD) are L3 loop. Phosphoserine occurs at positions 466 and 468.

The protein belongs to the dwarfin/SMAD family. Found in a complex with SMAD4 and YY1. Interacts with HGS, NANOG and ZCCHC12. Upon C-terminus phosphorylation: forms trimers with another SMAD1 and the co-SMAD SMAD4. Interacts with PEBP2-alpha subunit, CREB-binding protein (CBP), p300, SMURF1, SMURF2, USP15 and HOXC8. Associates with ZNF423 or ZNF521 in response to BMP2 leading to activate transcription of BMP target genes. Interacts with SKOR1. Interacts (via MH2 domain) with LEMD3. Binding to LEMD3 results in at least a partial reduction of receptor-mediated phosphorylation. Forms a ternary complex with PSMB4 and OAZ1 before PSMB4 is incorporated into the 20S proteasome. Interacts (via MH2 domain) with FAM83G (via MH2 domain); in a SMAD4-independent manner. Interacts with ZC3H3. Interacts with TMEM119. Interacts (via MH1 and MH2 domains) with ZNF8. Interacts with RANBP3L; the interaction increases when SMAD1 is not phosphorylated and mediates SMAD1 nuclear export. Interacts with EGR1; this interaction inhibits SMAD1 dephosphorylation. Interacts with SMAD6. Interacts with YAP1. Interacts with MTMR4; negatively regulates BMP signaling through SMAD1 dephosphorylation and retention in endosomes. Post-translationally, phosphorylation of the C-terminal SVS motif by BMP type 1 receptor kinase activates SMAD1 by promoting dissociation from the receptor and trimerization with SMAD4. Phosphorylation by ERK2 MAP kinase in response to EGF or HGF prevents SMAD1 nuclear accumulation and transcriptional activity in response to BMP. Dephosphorylation, probably by PPM1A, induces its export from the nucleus to the cytoplasm. Dephosphorylation is inhibited by association with EGR1. Phosphorylation by CDK8/9 creates binding sites for YAP1, and subsequent phosphorylation by GSK3 switches off YAP1 binding and adds binding sites for SMURF1. In terms of processing, ubiquitinated by SMAD-specific E3 ubiquitin ligase SMURF1, leading to its degradation. Monoubiquitinated, leading to prevent DNA-binding. Deubiquitination by USP15 alleviates inhibition and promotes activation of TGF-beta target genes. Dephosphorylation, probably by PPM1A, induces its export from the nucleus to the cytoplasm. Phospho-SMAD1 is ubiquitinated by CHIP leading to disruption of the SMAD1-SMAD4 complex. In terms of tissue distribution, ubiquitous; present in liver, lung, stomach and spleen with lower level in heart, testes and skeletal muscle.

It is found in the cytoplasm. The protein resides in the nucleus. Functionally, transcriptional modulator that plays a role in various cellular processes, including embryonic development, cell differentiation, and tissue homeostasis. Upon BMP ligand binding to their receptors at the cell surface, is phosphorylated by activated type I BMP receptors (BMPRIs) and associates with SMAD4 to form an heteromeric complex which translocates into the nucleus acting as transcription factor. In turn, the hetero-trimeric complex recognizes cis-regulatory elements containing Smad Binding Elements (SBEs) to modulate the outcome of the signaling network. SMAD1/OAZ1/PSMB4 complex mediates the degradation of the CREBBP/EP300 repressor SNIP1. Positively regulates BMP4-induced expression of odontogenic development regulator MSX1 following IPO7-mediated nuclear import. This Rattus norvegicus (Rat) protein is Mothers against decapentaplegic homolog 1 (Smad1).